Reading from the N-terminus, the 446-residue chain is tRNA-2-methylthio-N(6)-dimethylallyladenosine synthase (446 aa).

Positions 3 to 120 constitute an MTTase N-terminal domain; that stretch reads QKLFIKTYGC…LPEMVNSVAH (118 aa). [4Fe-4S] cluster contacts are provided by Cys12, Cys49, Cys83, Cys157, Cys161, and Cys164. The Radical SAM core domain maps to 143 to 375; sequence SSEGASAFVS…QQRILQFAQD (233 aa). The TRAM domain occupies 378–442; sequence RKMVGSTQRI…PNSLRGERVD (65 aa).

Belongs to the methylthiotransferase family. MiaB subfamily. Monomer. It depends on [4Fe-4S] cluster as a cofactor.

The protein localises to the cytoplasm. It catalyses the reaction N(6)-dimethylallyladenosine(37) in tRNA + (sulfur carrier)-SH + AH2 + 2 S-adenosyl-L-methionine = 2-methylsulfanyl-N(6)-dimethylallyladenosine(37) in tRNA + (sulfur carrier)-H + 5'-deoxyadenosine + L-methionine + A + S-adenosyl-L-homocysteine + 2 H(+). In terms of biological role, catalyzes the methylthiolation of N6-(dimethylallyl)adenosine (i(6)A), leading to the formation of 2-methylthio-N6-(dimethylallyl)adenosine (ms(2)i(6)A) at position 37 in tRNAs that read codons beginning with uridine. The polypeptide is tRNA-2-methylthio-N(6)-dimethylallyladenosine synthase (Hahella chejuensis (strain KCTC 2396)).